We begin with the raw amino-acid sequence, 270 residues long: Cystinosin homolog (270 aa).

In terms of domain architecture, PQ-loop 1 spans 9-75 (LEISYEIVGW…LYFSPVIQKQ (67 aa)). A helical transmembrane segment spans residues 14–34 (EIVGWIAFASWSISFYPQLIL). N-linked (GlcNAc...) asparagine glycosylation occurs at N52. Transmembrane regions (helical) follow at residues 93–113 (VAFSIHAVVMTAVTLFQIFIY), 123–143 (LAIGIVVVVWGFAAICFFIAL), and 148–168 (WLWLISIFNSIQVFMTCVKYI). Residues 151–213 (LISIFNSIQV…IQSIDQNSWK (63 aa)) form the PQ-loop 2 domain. N174 carries N-linked (GlcNAc...) asparagine glycosylation. A run of 2 helical transmembrane segments spans residues 180–200 (TVGWSIGNILLDFTGGLANYL) and 223–243 (LLSLISIFFDILFMFQHYVLY). Residues 250 to 270 (KSPETGEESNEPLIDSSHEHV) are disordered.

This sequence belongs to the cystinosin (TC 2.A.43.1) family.

The protein resides in the lysosome membrane. In terms of biological role, thought to transport cystine out of lysosomes. The sequence is that of Cystinosin homolog from Arabidopsis thaliana (Mouse-ear cress).